A 355-amino-acid chain; its full sequence is UDP-N-acetylglucosamine--N-acetylmuramyl-(pentapeptide) pyrophosphoryl-undecaprenol N-acetylglucosamine transferase (355 aa).

UDP-N-acetyl-alpha-D-glucosamine-binding positions include 15 to 17, Asn-127, Arg-163, Ser-191, Ile-244, 263 to 268, and Gln-288; these read TGG and ALTVSE.

The protein belongs to the glycosyltransferase 28 family. MurG subfamily.

It is found in the cell inner membrane. The enzyme catalyses di-trans,octa-cis-undecaprenyl diphospho-N-acetyl-alpha-D-muramoyl-L-alanyl-D-glutamyl-meso-2,6-diaminopimeloyl-D-alanyl-D-alanine + UDP-N-acetyl-alpha-D-glucosamine = di-trans,octa-cis-undecaprenyl diphospho-[N-acetyl-alpha-D-glucosaminyl-(1-&gt;4)]-N-acetyl-alpha-D-muramoyl-L-alanyl-D-glutamyl-meso-2,6-diaminopimeloyl-D-alanyl-D-alanine + UDP + H(+). The protein operates within cell wall biogenesis; peptidoglycan biosynthesis. Cell wall formation. Catalyzes the transfer of a GlcNAc subunit on undecaprenyl-pyrophosphoryl-MurNAc-pentapeptide (lipid intermediate I) to form undecaprenyl-pyrophosphoryl-MurNAc-(pentapeptide)GlcNAc (lipid intermediate II). The chain is UDP-N-acetylglucosamine--N-acetylmuramyl-(pentapeptide) pyrophosphoryl-undecaprenol N-acetylglucosamine transferase from Cronobacter sakazakii (strain ATCC BAA-894) (Enterobacter sakazakii).